We begin with the raw amino-acid sequence, 103 residues long: Pyrimidine/purine nucleoside phosphorylase (103 aa).

This sequence belongs to the nucleoside phosphorylase PpnP family.

The catalysed reaction is a purine D-ribonucleoside + phosphate = a purine nucleobase + alpha-D-ribose 1-phosphate. It carries out the reaction adenosine + phosphate = alpha-D-ribose 1-phosphate + adenine. It catalyses the reaction cytidine + phosphate = cytosine + alpha-D-ribose 1-phosphate. The enzyme catalyses guanosine + phosphate = alpha-D-ribose 1-phosphate + guanine. The catalysed reaction is inosine + phosphate = alpha-D-ribose 1-phosphate + hypoxanthine. It carries out the reaction thymidine + phosphate = 2-deoxy-alpha-D-ribose 1-phosphate + thymine. It catalyses the reaction uridine + phosphate = alpha-D-ribose 1-phosphate + uracil. The enzyme catalyses xanthosine + phosphate = alpha-D-ribose 1-phosphate + xanthine. Catalyzes the phosphorolysis of diverse nucleosides, yielding D-ribose 1-phosphate and the respective free bases. Can use uridine, adenosine, guanosine, cytidine, thymidine, inosine and xanthosine as substrates. Also catalyzes the reverse reactions. This Dechloromonas aromatica (strain RCB) protein is Pyrimidine/purine nucleoside phosphorylase.